Here is a 77-residue protein sequence, read N- to C-terminus: Conodipine-M alpha chain (77 aa).

Pyrrolidone carboxylic acid is present on Gln1. His36 is an active-site residue.

In terms of assembly, heterodimer of an alpha and a beta chains; probably disulfide-linked. The cofactor is Ca(2+). In terms of tissue distribution, expressed by the venom duct.

It localises to the secreted. It catalyses the reaction a 1,2-diacyl-sn-glycero-3-phosphocholine + H2O = a 1-acyl-sn-glycero-3-phosphocholine + a fatty acid + H(+). Its activity is regulated as follows. Inhibited by linoleoyl amide and MG14. Heterodimer: conodipine-M catalyzes the calcium-dependent hydrolysis of the 2-acyl groups in 3-sn-phosphoglycerides. This activity may be supported by the alpha chain. Conodipine-M inhibits the binding of isradipine (a ligand specific for L-type calcium channel) to L-type calcium channels. In Conus magus (Magical cone), this protein is Conodipine-M alpha chain.